Here is a 377-residue protein sequence, read N- to C-terminus: Nitric oxide reductase FlRd-NAD(+) reductase (377 aa).

Belongs to the FAD-dependent oxidoreductase family. It depends on FAD as a cofactor.

It localises to the cytoplasm. It carries out the reaction 2 reduced [nitric oxide reductase rubredoxin domain] + NAD(+) + H(+) = 2 oxidized [nitric oxide reductase rubredoxin domain] + NADH. It participates in nitrogen metabolism; nitric oxide reduction. One of at least two accessory proteins for anaerobic nitric oxide (NO) reductase. Reduces the rubredoxin moiety of NO reductase. This chain is Nitric oxide reductase FlRd-NAD(+) reductase, found in Escherichia coli (strain SE11).